Reading from the N-terminus, the 90-residue chain is Large ribosomal subunit protein bL27 (90 aa).

The tract at residues 1–22 is disordered; sequence MAHKKAGGSSRNGRDSESKRLG.

It belongs to the bacterial ribosomal protein bL27 family.

The chain is Large ribosomal subunit protein bL27 from Allorhizobium ampelinum (strain ATCC BAA-846 / DSM 112012 / S4) (Agrobacterium vitis (strain S4)).